Reading from the N-terminus, the 205-residue chain is 3-isopropylmalate dehydratase small subunit (205 aa).

Belongs to the LeuD family. LeuD type 1 subfamily. In terms of assembly, heterodimer of LeuC and LeuD.

It catalyses the reaction (2R,3S)-3-isopropylmalate = (2S)-2-isopropylmalate. It participates in amino-acid biosynthesis; L-leucine biosynthesis; L-leucine from 3-methyl-2-oxobutanoate: step 2/4. Catalyzes the isomerization between 2-isopropylmalate and 3-isopropylmalate, via the formation of 2-isopropylmaleate. The polypeptide is 3-isopropylmalate dehydratase small subunit (Christiangramia forsetii (strain DSM 17595 / CGMCC 1.15422 / KT0803) (Gramella forsetii)).